Reading from the N-terminus, the 357-residue chain is O-methyltransferase 1, chloroplastic (357 aa).

Residues 1–53 (MPVLPWLAAAATTPVRRSPPLPATPRALLRLPASSFPPWSNCAKSGLPPRGPF) constitute a chloroplast transit peptide. Positions 50–71 (RGPFATAADTPLGGSLPEPEEE) are disordered.

It belongs to the methyltransferase superfamily. LCMT family. In terms of tissue distribution, expressed in roots, leaf sheaths, flag leaves and panicles.

The protein resides in the plastid. The protein localises to the chloroplast. It carries out the reaction N-acetylserotonin + S-adenosyl-L-methionine = melatonin + S-adenosyl-L-homocysteine + H(+). Its pathway is aromatic compound metabolism; melatonin biosynthesis; melatonin from serotonin: step 1/2. Its function is as follows. Involved in melatonin biosynthesis. Can function as acetylserotonin O-methyltransferase. Catalyzes the transfer of a methyl group onto N-acetylserotonin, producing melatonin (N-acetyl-5-methoxytryptamine). Involved in the regulation of jasmonate- and brassinosteroid-mediated plant growth and defense responses. This chain is O-methyltransferase 1, chloroplastic, found in Oryza sativa subsp. japonica (Rice).